The sequence spans 387 residues: S-adenosylmethionine synthase (387 aa).

An ATP-binding site is contributed by histidine 17. A Mg(2+)-binding site is contributed by aspartate 19. Glutamate 45 is a K(+) binding site. L-methionine contacts are provided by glutamate 58 and glutamine 101. The tract at residues 101–111 is flexible loop; the sequence is QSPDIAQGVDR. Residues 168 to 170, 234 to 235, aspartate 243, 249 to 250, alanine 266, and lysine 270 each bind ATP; these read DAK, RF, and RK. Aspartate 243 contacts L-methionine. Residue lysine 274 participates in L-methionine binding.

The protein belongs to the AdoMet synthase family. Homotetramer; dimer of dimers. It depends on Mg(2+) as a cofactor. K(+) is required as a cofactor.

The protein resides in the cytoplasm. It catalyses the reaction L-methionine + ATP + H2O = S-adenosyl-L-methionine + phosphate + diphosphate. It functions in the pathway amino-acid biosynthesis; S-adenosyl-L-methionine biosynthesis; S-adenosyl-L-methionine from L-methionine: step 1/1. Its function is as follows. Catalyzes the formation of S-adenosylmethionine (AdoMet) from methionine and ATP. The overall synthetic reaction is composed of two sequential steps, AdoMet formation and the subsequent tripolyphosphate hydrolysis which occurs prior to release of AdoMet from the enzyme. The protein is S-adenosylmethionine synthase of Bordetella bronchiseptica (strain ATCC BAA-588 / NCTC 13252 / RB50) (Alcaligenes bronchisepticus).